The chain runs to 268 residues: Zinc transporter ZupT (268 aa).

8 consecutive transmembrane segments (helical) span residues 5-25, 38-58, 72-92, 124-144, 152-172, 187-207, 211-231, and 248-268; these read ILFAFSLTLLAGLATGIGSII, TVSLGFSAGVMLYVSMIEIFV, AGYIWTVIAFFVGIFVIALID, MGLFSALAIGIHNFPEGLATF, TLGISIAVAIAIHNIPEGLAV, FVLSFLSGLAEPIGAIAGFFL, LFTELTFGLVFASVAGIMVYI, and LAIGGLVGGMLVMAVSLLLFL. Fe(2+) contacts are provided by N136 and E139. Residues E139 and H164 each contribute to the Zn(2+) site. The Fe(2+) site is built by N165, E168, and E197. E168 serves as a coordination point for Zn(2+).

It belongs to the ZIP transporter (TC 2.A.5) family. ZupT subfamily.

Its subcellular location is the cell inner membrane. It catalyses the reaction Zn(2+)(in) = Zn(2+)(out). In terms of biological role, mediates zinc uptake. May also transport other divalent cations. The chain is Zinc transporter ZupT from Chlorobaculum parvum (strain DSM 263 / NCIMB 8327) (Chlorobium vibrioforme subsp. thiosulfatophilum).